The primary structure comprises 175 residues: NADH-quinone oxidoreductase subunit I (175 aa).

2 4Fe-4S ferredoxin-type domains span residues 69–98 (KRDE…IEAG) and 115–144 (KKFE…LDGP). C78, C81, C84, C88, C124, C127, C130, and C134 together coordinate [4Fe-4S] cluster.

The protein belongs to the complex I 23 kDa subunit family. NDH-1 is composed of 14 different subunits. Subunits NuoA, H, J, K, L, M, N constitute the membrane sector of the complex. Requires [4Fe-4S] cluster as cofactor.

It localises to the cell inner membrane. The enzyme catalyses a quinone + NADH + 5 H(+)(in) = a quinol + NAD(+) + 4 H(+)(out). Functionally, NDH-1 shuttles electrons from NADH, via FMN and iron-sulfur (Fe-S) centers, to quinones in the respiratory chain. The immediate electron acceptor for the enzyme in this species is believed to be ubiquinone. Couples the redox reaction to proton translocation (for every two electrons transferred, four hydrogen ions are translocated across the cytoplasmic membrane), and thus conserves the redox energy in a proton gradient. The polypeptide is NADH-quinone oxidoreductase subunit I (Leptospira borgpetersenii serovar Hardjo-bovis (strain JB197)).